The sequence spans 733 residues: ATP-dependent RNA helicase DBP7 (733 aa).

2 disordered regions span residues 1-92 (MDED…SKMI) and 119-139 (SSQL…SNAP). The span at 17–30 (SVSSGSNKRTTSKV) shows a compositional bias: polar residues. Basic and acidic residues predominate over residues 52 to 80 (QKKDRSATGKDDGKKHENDESNDSKKRPT). Residues 144–173 (STFEGLGINERLSKHLTETLRFKNPTKVQK) carry the Q motif motif. The Helicase ATP-binding domain maps to 177–372 (PTMLSTERDL…SIILNNPEMI (196 aa)). 190 to 197 (AQTGSGKT) lines the ATP pocket. A DEAD box motif is present at residues 304 to 307 (DEGD). One can recognise a Helicase C-terminal domain in the interval 406–596 (TLSAILKKIS…NYENYLKDGF (191 aa)). The disordered stretch occupies residues 687-714 (KKLGKSVESNSGIQGASKKTKKEDPRKK).

The protein belongs to the DEAD box helicase family. DDX31/DBP7 subfamily.

It localises to the nucleus. It is found in the nucleolus. It catalyses the reaction ATP + H2O = ADP + phosphate + H(+). Its function is as follows. ATP-binding RNA helicase involved in the biogenesis of 60S ribosomal subunits and is required for the normal formation of 25S and 5.8S rRNAs. The polypeptide is ATP-dependent RNA helicase DBP7 (DPB7) (Scheffersomyces stipitis (strain ATCC 58785 / CBS 6054 / NBRC 10063 / NRRL Y-11545) (Yeast)).